The sequence spans 346 residues: 3-keto-steroid reductase ERG27 (346 aa).

NADP(+) contacts are provided by Leu-19, Thr-42, and Lys-48. Catalysis depends on proton donor residues Ser-182 and Tyr-205. 3 residues coordinate NADP(+): Tyr-205, Lys-209, and Ser-241. The active-site Lowers pKa of active site Tyr is Lys-209. A helical membrane pass occupies residues 242 to 262; the sequence is FSFFQYLNVFTYYGMLFLFYL. Asn-272 is a glycosylation site (N-linked (GlcNAc...) asparagine).

This sequence belongs to the short-chain dehydrogenases/reductases (SDR) family. ERG27 subfamily. Heterotetramer of ERG25, ERG26, ERG27 and ERG28. ERG28 acts as a scaffold to tether ERG27 and other 4,4-demethylation-related enzymes, forming a demethylation enzyme complex, in the endoplasmic reticulum. Interacts with ERG25 and ERG28. Also interacts with ERG7, but only in lipid particles.

The protein resides in the endoplasmic reticulum membrane. Its subcellular location is the lipid droplet. It catalyses the reaction 3-dehydro-4alpha-methylzymosterol + NADPH + H(+) = 4alpha-methylzymosterol + NADP(+). Its pathway is steroid biosynthesis; zymosterol biosynthesis; zymosterol from lanosterol: step 5/6. 3-keto-steroid reductase; part of the third module of ergosterol biosynthesis pathway that includes the late steps of the pathway. ERG27 is a catalytic component of the C-4 demethylation complex that catalyzes the reduction of the keto group on the C-3. The third module or late pathway involves the ergosterol synthesis itself through consecutive reactions that mainly occur in the endoplasmic reticulum (ER) membrane. Firstly, the squalene synthase ERG9 catalyzes the condensation of 2 farnesyl pyrophosphate moieties to form squalene, which is the precursor of all steroids. Squalene synthase is crucial for balancing the incorporation of farnesyl diphosphate (FPP) into sterol and nonsterol isoprene synthesis. Secondly, the squalene epoxidase ERG1 catalyzes the stereospecific oxidation of squalene to (S)-2,3-epoxysqualene, which is considered to be a rate-limiting enzyme in steroid biosynthesis. Then, the lanosterol synthase ERG7 catalyzes the cyclization of (S)-2,3 oxidosqualene to lanosterol, a reaction that forms the sterol core. In the next steps, lanosterol is transformed to zymosterol through a complex process involving various demethylation, reduction and desaturation reactions. The lanosterol 14-alpha-demethylase ERG11 (also known as CYP51) catalyzes C14-demethylation of lanosterol to produce 4,4'-dimethyl cholesta-8,14,24-triene-3-beta-ol, which is critical for ergosterol biosynthesis. The C-14 reductase ERG24 reduces the C14=C15 double bond of 4,4-dimethyl-cholesta-8,14,24-trienol to produce 4,4-dimethyl-cholesta-8,24-dienol. 4,4-dimethyl-cholesta-8,24-dienol is substrate of the C-4 demethylation complex ERG25-ERG26-ERG27 in which ERG25 catalyzes the three-step monooxygenation required for the demethylation of 4,4-dimethyl and 4alpha-methylsterols, ERG26 catalyzes the oxidative decarboxylation that results in a reduction of the 3-beta-hydroxy group at the C-3 carbon to an oxo group, and ERG27 is responsible for the reduction of the keto group on the C-3. ERG28 has a role as a scaffold to help anchor ERG25, ERG26 and ERG27 to the endoplasmic reticulum and ERG29 regulates the activity of the iron-containing C4-methylsterol oxidase ERG25. Then, the sterol 24-C-methyltransferase ERG6 catalyzes the methyl transfer from S-adenosyl-methionine to the C-24 of zymosterol to form fecosterol. The C-8 sterol isomerase ERG2 catalyzes the reaction which results in unsaturation at C-7 in the B ring of sterols and thus converts fecosterol to episterol. The sterol-C5-desaturase ERG3 then catalyzes the introduction of a C-5 double bond in the B ring to produce 5-dehydroepisterol. The C-22 sterol desaturase ERG5 further converts 5-dehydroepisterol into ergosta-5,7,22,24(28)-tetraen-3beta-ol by forming the C-22(23) double bond in the sterol side chain. Finally, ergosta-5,7,22,24(28)-tetraen-3beta-ol is substrate of the C-24(28) sterol reductase ERG4 to produce ergosterol. Functionally, facilitates the association of ERG7 with lipid particles preventing its digestion in the endoplasmic reticulum and the lipid particles. The protein is 3-keto-steroid reductase ERG27 of Candida albicans (Yeast).